The following is a 1054-amino-acid chain: Topoisomerase 1-associated factor 1 (1054 aa).

4 disordered regions span residues 522 to 543 (KADDTGNVEDLESLPGEEHESA), 823 to 846 (RDDKERRGAGGDKEGSQDAEEDDE), 865 to 953 (EMFA…TINL), and 968 to 1054 (VSDG…DDDE). Over residues 823 to 838 (RDDKERRGAGGDKEGS) the composition is skewed to basic and acidic residues. The segment covering 877–887 (KTKQKLKRKGT) has biased composition (basic residues). Basic and acidic residues-rich tracts occupy residues 890–901 (STREREKQRDYT), 928–953 (ERDRKFFEKENELREELRKAEPTINL), and 979–1017 (TESHKQYREKVDEDRDDLSHMAERENRQYDFGDEGHDSD).

Belongs to the timeless family. As to quaternary structure, component of the fork protection complex (FPC) consisting of TOF1 and CSM3.

The protein localises to the nucleus. Functionally, forms a fork protection complex (FPC) with CSM3 and which is required for chromosome segregation during meiosis and DNA damage repair. FPC coordinates leading and lagging strand synthesis and moves with the replication fork. FPC stabilizes replication forks in a configuration that is recognized by replication checkpoint sensors. This is Topoisomerase 1-associated factor 1 (TOF1) from Yarrowia lipolytica (strain CLIB 122 / E 150) (Yeast).